Reading from the N-terminus, the 284-residue chain is tRNA-cytidine(32) 2-sulfurtransferase (284 aa).

A PP-loop motif motif is present at residues 44-49 (SGGKDS). Residues Cys-119, Cys-122, and Cys-210 each coordinate [4Fe-4S] cluster.

This sequence belongs to the TtcA family. In terms of assembly, homodimer. It depends on Mg(2+) as a cofactor. [4Fe-4S] cluster serves as cofactor.

It is found in the cytoplasm. The enzyme catalyses cytidine(32) in tRNA + S-sulfanyl-L-cysteinyl-[cysteine desulfurase] + AH2 + ATP = 2-thiocytidine(32) in tRNA + L-cysteinyl-[cysteine desulfurase] + A + AMP + diphosphate + H(+). The protein operates within tRNA modification. Functionally, catalyzes the ATP-dependent 2-thiolation of cytidine in position 32 of tRNA, to form 2-thiocytidine (s(2)C32). The sulfur atoms are provided by the cysteine/cysteine desulfurase (IscS) system. The polypeptide is tRNA-cytidine(32) 2-sulfurtransferase (Chromohalobacter salexigens (strain ATCC BAA-138 / DSM 3043 / CIP 106854 / NCIMB 13768 / 1H11)).